The following is a 453-amino-acid chain: Kynurenine 3-monooxygenase (453 aa).

This sequence belongs to the aromatic-ring hydroxylase family. KMO subfamily. The cofactor is FAD.

The catalysed reaction is L-kynurenine + NADPH + O2 + H(+) = 3-hydroxy-L-kynurenine + NADP(+) + H2O. The protein operates within cofactor biosynthesis; NAD(+) biosynthesis; quinolinate from L-kynurenine: step 1/3. Functionally, catalyzes the hydroxylation of L-kynurenine (L-Kyn) to form 3-hydroxy-L-kynurenine (L-3OHKyn). Required for synthesis of quinolinic acid. This chain is Kynurenine 3-monooxygenase, found in Salinispora tropica (strain ATCC BAA-916 / DSM 44818 / JCM 13857 / NBRC 105044 / CNB-440).